The sequence spans 511 residues: D-alanine--D-alanyl carrier protein ligase (511 aa).

152-153 (TS) lines the ATP pocket. Asp-199 is a binding site for D-alanine. 294–299 (NAYGPT) contacts ATP. Residue Val-303 participates in D-alanine binding. ATP-binding positions include Asp-385, 397 to 400 (YGGR), and Lys-499. A D-alanine-binding site is contributed by Lys-499.

This sequence belongs to the ATP-dependent AMP-binding enzyme family. DltA subfamily.

It localises to the cytoplasm. It catalyses the reaction holo-[D-alanyl-carrier protein] + D-alanine + ATP = D-alanyl-[D-alanyl-carrier protein] + AMP + diphosphate. Its pathway is cell wall biogenesis; lipoteichoic acid biosynthesis. Its function is as follows. Catalyzes the first step in the D-alanylation of lipoteichoic acid (LTA), the activation of D-alanine and its transfer onto the D-alanyl carrier protein (Dcp) DltC. In an ATP-dependent two-step reaction, forms a high energy D-alanyl-AMP intermediate, followed by transfer of the D-alanyl residue as a thiol ester to the phosphopantheinyl prosthetic group of the Dcp. D-alanylation of LTA plays an important role in modulating the properties of the cell wall in Gram-positive bacteria, influencing the net charge of the cell wall. The protein is D-alanine--D-alanyl carrier protein ligase of Streptococcus agalactiae serotype V (strain ATCC BAA-611 / 2603 V/R).